The following is a 228-amino-acid chain: Sec-independent protein translocase protein TatB (228 aa).

The chain crosses the membrane as a helical span at residues 1–21; sequence MFDFGLGELIFVGIIALIVLG. Disordered stretches follow at residues 106–164 and 196–228; these read TPAD…TDKD and VPHTTSLRKQAINRKRDFRPKHRAKPKLRVRKS. Residues 135 to 151 are compositionally biased toward basic and acidic residues; the sequence is PSERSDTSAETLGDDRQ. Basic residues predominate over residues 206–228; that stretch reads AINRKRDFRPKHRAKPKLRVRKS.

Belongs to the TatB family. In terms of assembly, the Tat system comprises two distinct complexes: a TatABC complex, containing multiple copies of TatA, TatB and TatC subunits, and a separate TatA complex, containing only TatA subunits. Substrates initially bind to the TatABC complex, which probably triggers association of the separate TatA complex to form the active translocon.

It localises to the cell inner membrane. Part of the twin-arginine translocation (Tat) system that transports large folded proteins containing a characteristic twin-arginine motif in their signal peptide across membranes. Together with TatC, TatB is part of a receptor directly interacting with Tat signal peptides. TatB may form an oligomeric binding site that transiently accommodates folded Tat precursor proteins before their translocation. The chain is Sec-independent protein translocase protein TatB from Neisseria gonorrhoeae (strain ATCC 700825 / FA 1090).